We begin with the raw amino-acid sequence, 226 residues long: Gap junction beta-2 protein (226 aa).

An intramembrane segment occupies 2–13 (DWGTLQTILGGV). Residues 14-20 (NKHSTSI) are Cytoplasmic-facing. Residues 21–40 (GKIWLTVLFIFRIMILVVAA) form a helical membrane-spanning segment. Topologically, residues 41–73 (KEVWGDEQADFVCNTLQPGCKNVCYDHYFPISH) are extracellular. Positions 42, 45, and 47 each coordinate Ca(2+). Intrachain disulfides connect Cys-53–Cys-180, Cys-60–Cys-174, and Cys-64–Cys-169. Residues 74–94 (IRLWALQLIFVSTPALLVAMH) traverse the membrane as a helical segment. The Cytoplasmic portion of the chain corresponds to 95–135 (VAYRRHEKKRKFIKGEIKSEFKDIEEIKTQKVRIEGSLWWT). Residues 136–156 (YTSSIFFRVIFEAAFMYVFYV) traverse the membrane as a helical segment. Over 157-189 (MYDGFSMQRLVKCNAWPCPNTVDCFVSRPTEKT) the chain is Extracellular. Residues 190 to 210 (VFTVFMIAVSGICILLNVTEL) traverse the membrane as a helical segment. The Cytoplasmic segment spans residues 211 to 226 (CYLLIRYCSGKSKKPV).

This sequence belongs to the connexin family. Beta-type (group I) subfamily. In terms of assembly, a hemichannel or connexon is composed of a hexamer of connexins. A functional gap junction is formed by the apposition of two hemichannels. Forms heteromeric channels with GJB4. Interacts with CNST.

The protein localises to the cell membrane. It localises to the cell junction. Its subcellular location is the gap junction. Its function is as follows. Structural component of gap junctions. Gap junctions are dodecameric channels that connect the cytoplasm of adjoining cells. They are formed by the docking of two hexameric hemichannels, one from each cell membrane. Small molecules and ions diffuse from one cell to a neighboring cell via the central pore. This is Gap junction beta-2 protein (GJB2) from Gorilla gorilla gorilla (Western lowland gorilla).